The chain runs to 422 residues: Validoxylamine A glucosyltransferase (422 aa).

It belongs to the glycosyltransferase 2 family. It depends on Mn(2+) as a cofactor.

The enzyme catalyses validoxylamine A + UDP-alpha-D-glucose = validamycin A + UDP + H(+). In terms of biological role, involved in the biosynthesis of the antifungal agent validamycin A. Catalyzes the final attachment of glucose from UDP-alpha-D-glucose to validoxylamine A to yield validamycin A. UDP-glucose is the most efficient glycosyl donor, whereas GDP-glucose and ADP-glucose are much less efficient. ValG also utilizes UDP-galactose as substrate to produce the new validamycin analog, 4''-epi-validamycin A. This is Validoxylamine A glucosyltransferase from Streptomyces hygroscopicus subsp. jinggangensis (strain 5008).